A 500-amino-acid polypeptide reads, in one-letter code: NADH-quinone oxidoreductase subunit N (500 aa).

The next 14 membrane-spanning stretches (helical) occupy residues 13–33, 42–62, 79–99, 111–131, 133–153, 168–188, 211–231, 245–265, 281–301, 321–341, 342–362, 386–406, 424–444, and 461–481; these read VMMP…IDLF, LLGL…LSLW, FAKS…LLSI, GEFY…ASSG, LITL…LVAI, VITG…IFGF, YVLS…LASA, TTPV…VIVL, ASML…TMII, VAHA…MFEA, IWFY…ILQV, AIAM…AGFI, VLAS…FGIF, and PPGV…LGVF.

This sequence belongs to the complex I subunit 2 family. In terms of assembly, NDH-1 is composed of 14 different subunits. Subunits NuoA, H, J, K, L, M, N constitute the membrane sector of the complex.

It is found in the cell membrane. The catalysed reaction is a quinone + NADH + 5 H(+)(in) = a quinol + NAD(+) + 4 H(+)(out). In terms of biological role, NDH-1 shuttles electrons from NADH, via FMN and iron-sulfur (Fe-S) centers, to quinones in the respiratory chain. The immediate electron acceptor for the enzyme in this species is believed to be a menaquinone. Couples the redox reaction to proton translocation (for every two electrons transferred, four hydrogen ions are translocated across the cytoplasmic membrane), and thus conserves the redox energy in a proton gradient. The protein is NADH-quinone oxidoreductase subunit N of Anoxybacillus flavithermus (strain DSM 21510 / WK1).